The primary structure comprises 233 residues: MSTTAQDVEALVHSDDPNHPANHICTLCAKFYTLGWVTGTGGGTSIRHEDKIYIAPSGVQKELMKPTDMFVMDFESKEYLRRPQVLKPSACTPLFMAAFERGAGCCIHTHSQWAVLVTLLVERDLGTEACFEIEEIEQIKGIPKGRGKQGNLGYYDRLRIPIIENTAHEEDLRESLEAAMERWPDSYAILVRRHGIYVWGDNVHKAKTQCESIDYILQLAVEMKKLGLPWTKS.

Cys-91 contributes to the substrate binding site. Zn(2+) contacts are provided by His-108 and His-110. Catalysis depends on Glu-137, which acts as the Proton donor/acceptor. Zn(2+) is bound at residue His-194.

It belongs to the aldolase class II family. MtnB subfamily. Zn(2+) is required as a cofactor.

The protein resides in the cytoplasm. The catalysed reaction is 5-(methylsulfanyl)-D-ribulose 1-phosphate = 5-methylsulfanyl-2,3-dioxopentyl phosphate + H2O. It functions in the pathway amino-acid biosynthesis; L-methionine biosynthesis via salvage pathway; L-methionine from S-methyl-5-thio-alpha-D-ribose 1-phosphate: step 2/6. Its function is as follows. Catalyzes the dehydration of methylthioribulose-1-phosphate (MTRu-1-P) into 2,3-diketo-5-methylthiopentyl-1-phosphate (DK-MTP-1-P). The protein is Methylthioribulose-1-phosphate dehydratase of Phaeosphaeria nodorum (strain SN15 / ATCC MYA-4574 / FGSC 10173) (Glume blotch fungus).